Consider the following 128-residue polypeptide: Large ribosomal subunit protein bL12 (128 aa).

It belongs to the bacterial ribosomal protein bL12 family. As to quaternary structure, homodimer. Part of the ribosomal stalk of the 50S ribosomal subunit. Forms a multimeric L10(L12)X complex, where L10 forms an elongated spine to which 2 to 4 L12 dimers bind in a sequential fashion. Binds GTP-bound translation factors.

Functionally, forms part of the ribosomal stalk which helps the ribosome interact with GTP-bound translation factors. Is thus essential for accurate translation. The protein is Large ribosomal subunit protein bL12 of Thermosipho africanus (strain TCF52B).